The primary structure comprises 465 residues: Ribulose bisphosphate carboxylase large chain (465 aa).

The residue at position 4 (Lys4) is an N6,N6,N6-trimethyllysine. Asn113 and Thr163 together coordinate substrate. Lys165 functions as the Proton acceptor in the catalytic mechanism. A substrate-binding site is contributed by Lys167. Mg(2+)-binding residues include Lys191, Asp193, and Glu194. An N6-carboxylysine modification is found at Lys191. His284 functions as the Proton acceptor in the catalytic mechanism. Residues Arg285, His317, and Ser369 each coordinate substrate.

Belongs to the RuBisCO large chain family. Type I subfamily. As to quaternary structure, heterohexadecamer of 8 large chains and 8 small chains; disulfide-linked. The disulfide link is formed within the large subunit homodimers. Requires Mg(2+) as cofactor. In terms of processing, the disulfide bond which can form in the large chain dimeric partners within the hexadecamer appears to be associated with oxidative stress and protein turnover.

It is found in the plastid. It localises to the chloroplast. It carries out the reaction 2 (2R)-3-phosphoglycerate + 2 H(+) = D-ribulose 1,5-bisphosphate + CO2 + H2O. The enzyme catalyses D-ribulose 1,5-bisphosphate + O2 = 2-phosphoglycolate + (2R)-3-phosphoglycerate + 2 H(+). Functionally, ruBisCO catalyzes two reactions: the carboxylation of D-ribulose 1,5-bisphosphate, the primary event in carbon dioxide fixation, as well as the oxidative fragmentation of the pentose substrate in the photorespiration process. Both reactions occur simultaneously and in competition at the same active site. This chain is Ribulose bisphosphate carboxylase large chain, found in Epacris sp.